The sequence spans 336 residues: Isopentenyl-diphosphate delta-isomerase (336 aa).

Residue 5–6 (RK) coordinates substrate. Residues 60-62 (AMT), Ser-90, and Asn-117 contribute to the FMN site. Gln-147 lines the substrate pocket. Glu-148 serves as a coordination point for Mg(2+). Residues Lys-179, Ser-204, Thr-209, 253–255 (GVR), and 274–275 (SR) each bind FMN.

The protein belongs to the IPP isomerase type 2 family. Homooctamer. Dimer of tetramers. The cofactor is FMN. NADPH is required as a cofactor. Mg(2+) serves as cofactor.

It is found in the cytoplasm. It carries out the reaction isopentenyl diphosphate = dimethylallyl diphosphate. In terms of biological role, involved in the biosynthesis of isoprenoids. Catalyzes the 1,3-allylic rearrangement of the homoallylic substrate isopentenyl (IPP) to its allylic isomer, dimethylallyl diphosphate (DMAPP). This Streptococcus pneumoniae serotype 4 (strain ATCC BAA-334 / TIGR4) protein is Isopentenyl-diphosphate delta-isomerase.